A 354-amino-acid polypeptide reads, in one-letter code: D-alanine--D-alanine ligase (354 aa).

In terms of domain architecture, ATP-grasp spans 132–342; the sequence is KMVFERAGLP…FPSLVDRLLQ (211 aa). 168 to 223 lines the ATP pocket; the sequence is EAQVGYPCFVKPANLGSSVGIAKVRNRSELEAALDNAASYDRRIIVEAGLTDIREV. Asp295, Glu309, and Asn311 together coordinate Mg(2+).

The protein belongs to the D-alanine--D-alanine ligase family. It depends on Mg(2+) as a cofactor. Requires Mn(2+) as cofactor.

It is found in the cytoplasm. The enzyme catalyses 2 D-alanine + ATP = D-alanyl-D-alanine + ADP + phosphate + H(+). The protein operates within cell wall biogenesis; peptidoglycan biosynthesis. Functionally, cell wall formation. The polypeptide is D-alanine--D-alanine ligase (Synechocystis sp. (strain ATCC 27184 / PCC 6803 / Kazusa)).